A 675-amino-acid polypeptide reads, in one-letter code: DNA ligase (675 aa).

NAD(+) contacts are provided by residues 33–37 (DAEYD), 82–83 (SL), and glutamate 115. The active-site N6-AMP-lysine intermediate is the lysine 117. NAD(+) is bound by residues arginine 138, glutamate 175, lysine 293, and lysine 317. Zn(2+) contacts are provided by cysteine 411, cysteine 414, cysteine 429, and cysteine 435. Positions 594-675 (IADNPLKDKT…LIGYFTTIVS (82 aa)) constitute a BRCT domain.

This sequence belongs to the NAD-dependent DNA ligase family. LigA subfamily. Requires Mg(2+) as cofactor. The cofactor is Mn(2+).

It carries out the reaction NAD(+) + (deoxyribonucleotide)n-3'-hydroxyl + 5'-phospho-(deoxyribonucleotide)m = (deoxyribonucleotide)n+m + AMP + beta-nicotinamide D-nucleotide.. DNA ligase that catalyzes the formation of phosphodiester linkages between 5'-phosphoryl and 3'-hydroxyl groups in double-stranded DNA using NAD as a coenzyme and as the energy source for the reaction. It is essential for DNA replication and repair of damaged DNA. The polypeptide is DNA ligase (Glaesserella parasuis serovar 5 (strain SH0165) (Haemophilus parasuis)).